The sequence spans 431 residues: Glutamate--tRNA ligase 1 (431 aa).

The 'HIGH' region motif lies at 6 to 16 (PSPTGDMHIGN). The 'KMSKS' region motif lies at 235–239 (KMSKR). Residue K238 coordinates ATP.

Belongs to the class-I aminoacyl-tRNA synthetase family. Glutamate--tRNA ligase type 1 subfamily. In terms of assembly, monomer.

The protein localises to the cytoplasm. The enzyme catalyses tRNA(Glu) + L-glutamate + ATP = L-glutamyl-tRNA(Glu) + AMP + diphosphate. In terms of biological role, catalyzes the attachment of glutamate to tRNA(Glu) in a two-step reaction: glutamate is first activated by ATP to form Glu-AMP and then transferred to the acceptor end of tRNA(Glu). In Campylobacter concisus (strain 13826), this protein is Glutamate--tRNA ligase 1.